A 282-amino-acid chain; its full sequence is Putative hydrolase Bcenmc03_4750 (282 aa).

3 residues coordinate Mg(2+): Glu-124, Glu-126, and Asp-155.

The protein belongs to the FAH family. Mg(2+) is required as a cofactor.

In Burkholderia orbicola (strain MC0-3), this protein is Putative hydrolase Bcenmc03_4750.